We begin with the raw amino-acid sequence, 436 residues long: Adenylosuccinate synthetase (436 aa).

GTP is bound by residues 12 to 18 and 40 to 42; these read GDEGKGK and GHT. Residue Asp-13 is the Proton acceptor of the active site. Positions 13 and 40 each coordinate Mg(2+). Residues 13–16, 38–41, Thr-128, Arg-142, Gln-223, Thr-238, and Arg-302 each bind IMP; these read DEGK and NAGH. His-41 acts as the Proton donor in catalysis. 298–304 lines the substrate pocket; that stretch reads TTTGRRR. GTP-binding positions include Arg-304, 330-332, and 412-414; these read KLD and SLG.

The protein belongs to the adenylosuccinate synthetase family. In terms of assembly, homodimer. Requires Mg(2+) as cofactor.

It localises to the cytoplasm. It catalyses the reaction IMP + L-aspartate + GTP = N(6)-(1,2-dicarboxyethyl)-AMP + GDP + phosphate + 2 H(+). The protein operates within purine metabolism; AMP biosynthesis via de novo pathway; AMP from IMP: step 1/2. In terms of biological role, plays an important role in the de novo pathway of purine nucleotide biosynthesis. Catalyzes the first committed step in the biosynthesis of AMP from IMP. This is Adenylosuccinate synthetase from Prochlorococcus marinus (strain MIT 9215).